A 280-amino-acid polypeptide reads, in one-letter code: Ribulose-phosphate 3-epimerase, chloroplastic (280 aa).

A chloroplast-targeting transit peptide spans Ser1–Ala45. Residue Ser62 participates in substrate binding. 3 residues coordinate a divalent metal cation: His87, Asp89, and His120. The active-site Proton acceptor is Asp89. Residues His120, Gly198–Gly201, Asp231–Gly233, and Gly253–Ser254 each bind substrate. Asp231 contacts a divalent metal cation. Asp231 functions as the Proton donor in the catalytic mechanism.

Belongs to the ribulose-phosphate 3-epimerase family. As to quaternary structure, homohexamer. Requires Co(2+) as cofactor. Fe(2+) is required as a cofactor. It depends on Mn(2+) as a cofactor. Zn(2+) serves as cofactor. As to expression, highest level of expression in leaves, whereas it is low in roots, tubers, and stems.

Its subcellular location is the plastid. The protein resides in the chloroplast thylakoid membrane. It catalyses the reaction D-ribulose 5-phosphate = D-xylulose 5-phosphate. Its pathway is carbohydrate biosynthesis; Calvin cycle. In terms of biological role, catalyzes the reversible epimerization of D-ribulose 5-phosphate to D-xylulose 5-phosphate. The polypeptide is Ribulose-phosphate 3-epimerase, chloroplastic (Solanum tuberosum (Potato)).